The primary structure comprises 217 residues: Nitrile hydratase subunit beta (217 aa).

The protein belongs to the nitrile hydratase subunit beta family. As to quaternary structure, heterodimer of an alpha and a beta chain.

It catalyses the reaction an aliphatic primary amide = an aliphatic nitrile + H2O. Its function is as follows. NHase catalyzes the hydration of various nitrile compounds to the corresponding amides. The sequence is that of Nitrile hydratase subunit beta (nthB) from Pseudomonas putida (Arthrobacter siderocapsulatus).